The primary structure comprises 215 residues: Redox-sensing transcriptional repressor Rex (215 aa).

A DNA-binding region (H-T-H motif) is located at residues 18-57 (LYYRFLKNLHASGKQRVSSAELSDAVKVDSATIRRDFSYF). An NAD(+)-binding site is contributed by 92–97 (GVGNLG).

This sequence belongs to the transcriptional regulatory Rex family. Homodimer.

Its subcellular location is the cytoplasm. Functionally, modulates transcription in response to changes in cellular NADH/NAD(+) redox state. In Bacillus licheniformis (strain ATCC 14580 / DSM 13 / JCM 2505 / CCUG 7422 / NBRC 12200 / NCIMB 9375 / NCTC 10341 / NRRL NRS-1264 / Gibson 46), this protein is Redox-sensing transcriptional repressor Rex.